The primary structure comprises 105 residues: Mini zinc finger protein 1 (105 aa).

Residues 1–29 (MGPQQDRSAAKPYANGSTAAAAAAGRKEN) are disordered. A ZF-HD dimerization-type; degenerate zinc finger spans residues 35 to 84 (YRECQRNHAASIGGHAVDGCREFMASGAEGTAAALLCAACGCHRSFHRRE).

As to quaternary structure, homo- and heterodimers.

The protein resides in the cytoplasm. Its function is as follows. Inhibits zinc finger homeodomain (ZHD) transcription factors, by interacting with them to prevent both their nuclear localization and their DNA-binding properties. The sequence is that of Mini zinc finger protein 1 (MIF1) from Oryza sativa subsp. indica (Rice).